Consider the following 526-residue polypeptide: Amine oxidase [flavin-containing] A (526 aa).

Met-1 bears the N-acetylmethionine mark. The Cytoplasmic portion of the chain corresponds to 1–497 (MTDLEKPNLA…HTFLERNLPS (497 aa)). Ser-383 is modified (phosphoserine). Cys-406 is subject to S-8alpha-FAD cysteine. The chain crosses the membrane as a helical; Anchor for type IV membrane protein span at residues 498–518 (VPGLLKITGVSTSVALLCFVL). Over 519 to 526 (YKIKKLPC) the chain is Mitochondrial intermembrane. The tract at residues 520-522 (KIK) is interaction with membrane phospholipid headgroups.

The protein belongs to the flavin monoamine oxidase family. In terms of assembly, monomer, homo- or heterodimer (containing two subunits of similar size). Each subunit contains a covalently bound flavin. Enzymatically active as monomer. The cofactor is FAD.

The protein localises to the mitochondrion outer membrane. The catalysed reaction is a secondary aliphatic amine + O2 + H2O = a primary amine + an aldehyde + H2O2. The enzyme catalyses a primary methyl amine + O2 + H2O = an aldehyde + H2O2 + NH4(+). It catalyses the reaction (R)-adrenaline + O2 + H2O = (R)-3,4-dihydroxymandelaldehyde + methylamine + H2O2. It carries out the reaction dopamine + O2 + H2O = 3,4-dihydroxyphenylacetaldehyde + H2O2 + NH4(+). The catalysed reaction is tyramine + O2 + H2O = (4-hydroxyphenyl)acetaldehyde + H2O2 + NH4(+). The enzyme catalyses (R)-noradrenaline + O2 + H2O = (R)-3,4-dihydroxymandelaldehyde + H2O2 + NH4(+). It catalyses the reaction serotonin + O2 + H2O = (5-hydroxyindol-3-yl)acetaldehyde + H2O2 + NH4(+). It carries out the reaction kynuramine + O2 + H2O = 3-(2-aminophenyl)-3-oxopropanal + H2O2 + NH4(+). The catalysed reaction is tryptamine + O2 + H2O = indole-3-acetaldehyde + H2O2 + NH4(+). The enzyme catalyses 2-phenylethylamine + O2 + H2O = 2-phenylacetaldehyde + H2O2 + NH4(+). Catalyzes the oxidative deamination of primary and some secondary amine such as neurotransmitters, with concomitant reduction of oxygen to hydrogen peroxide and has important functions in the metabolism of neuroactive and vasoactive amines in the central nervous system and peripheral tissues. Preferentially oxidizes serotonin. Also catalyzes the oxidative deamination of kynuramine to 3-(2-aminophenyl)-3-oxopropanal that can spontaneously condense to 4-hydroxyquinoline. The protein is Amine oxidase [flavin-containing] A of Rattus norvegicus (Rat).